The sequence spans 442 residues: 3-ketoacyl-CoA thiolase (442 aa).

Cysteine 105 (acyl-thioester intermediate) is an active-site residue. Residues histidine 398 and cysteine 428 each act as proton acceptor in the active site.

The protein belongs to the thiolase-like superfamily. Thiolase family. Heterotetramer of two alpha chains (FadJ) and two beta chains (FadI).

It localises to the cytoplasm. The catalysed reaction is an acyl-CoA + acetyl-CoA = a 3-oxoacyl-CoA + CoA. It participates in lipid metabolism; fatty acid beta-oxidation. In terms of biological role, catalyzes the final step of fatty acid oxidation in which acetyl-CoA is released and the CoA ester of a fatty acid two carbons shorter is formed. This Aliivibrio fischeri (strain ATCC 700601 / ES114) (Vibrio fischeri) protein is 3-ketoacyl-CoA thiolase.